We begin with the raw amino-acid sequence, 602 residues long: Potassium-transporting ATPase potassium-binding subunit (602 aa).

Helical transmembrane passes span 3–23 (ANNLLQAAIFIVVLIAAAVPV), 64–84 (QYALATVAFNALGVLFLYALL), 135–155 (GLTVQNFLSAATGIVVVLALI), 178–198 (LYVLVPMAAIIAALLMSQGVI), 282–302 (FSNFLEIFAILIIPAALCLVF), 313–333 (VAVLAAMTVALAAAIGIETSA), 418–438 (GLYGMLVFALLAVFVAGLMIG), 456–476 (VSIVVLLTPLLVLVGTSIAVL), 522–542 (WMTAIAMWFGRFGTIVPVLAI), and 565–585 (LFVVLLLGTVLLVGALTYMPA).

This sequence belongs to the KdpA family. As to quaternary structure, the system is composed of three essential subunits: KdpA, KdpB and KdpC.

The protein resides in the cell inner membrane. Part of the high-affinity ATP-driven potassium transport (or Kdp) system, which catalyzes the hydrolysis of ATP coupled with the electrogenic transport of potassium into the cytoplasm. This subunit binds the periplasmic potassium ions and delivers the ions to the membrane domain of KdpB through an intramembrane tunnel. The chain is Potassium-transporting ATPase potassium-binding subunit from Burkholderia mallei (strain ATCC 23344).